Here is a 465-residue protein sequence, read N- to C-terminus: MAP kinase-interacting serine/threonine-protein kinase 1 (465 aa).

Basic and acidic residues predominate over residues 1-11; that stretch reads MVSSQKLEKPI. The segment at 1–40 is disordered; that stretch reads MVSSQKLEKPIEMGSSEPLPIADGDRRRKKKRRGRATDSL. Ser39 is modified (phosphoserine). The Protein kinase domain maps to 49-374; sequence KLTSELLGEG…AAQVLQHPWV (326 aa). ATP-binding positions include 55-63 and Lys78; that span reads LGEGAYAKV. Over residues 185-203 the composition is skewed to polar residues; that stretch reads APTSLGSSDPPTSASQVAG. The segment at 185–204 is disordered; that stretch reads APTSLGSSDPPTSASQVAGT. The Proton acceptor role is filled by Asp211. A phosphoserine mark is found at Ser221 and Ser226. A phosphothreonine mark is found at Thr250, Thr255, and Thr385. The disordered stretch occupies residues 446-465; sequence RRRALAQAGRGEDRSPPTAL. Over residues 455-465 the composition is skewed to basic and acidic residues; sequence RGEDRSPPTAL. At Ser460 the chain carries Phosphoserine.

This sequence belongs to the protein kinase superfamily. CAMK Ser/Thr protein kinase family. In terms of assembly, interacts with the C-terminal regions of EIF4G1 and EIF4G2. Also binds to dephosphorylated ERK1 and ERK2, and to the p38 kinases. Mg(2+) is required as a cofactor. Post-translationally, dual phosphorylation of Thr-250 and Thr-255 activates the kinase. Phosphorylation of Thr-385 activates the kinase. MAPK3/ERK1 is one of the kinases which activate MKNK1/MNK1. Phosphorylation by PAK2 leads to a reduced phosphorylation of EIF4G1. In terms of tissue distribution, ubiquitous.

The protein localises to the cytoplasm. Its subcellular location is the nucleus. It catalyses the reaction L-seryl-[protein] + ATP = O-phospho-L-seryl-[protein] + ADP + H(+). The catalysed reaction is L-threonyl-[protein] + ATP = O-phospho-L-threonyl-[protein] + ADP + H(+). Its activity is regulated as follows. Phosphorylated and activated by the p38 kinases and kinases in the Erk pathway. In terms of biological role, may play a role in the response to environmental stress and cytokines. Appears to regulate translation by phosphorylating EIF4E, thus increasing the affinity of this protein for the 7-methylguanosine-containing mRNA cap. The polypeptide is MAP kinase-interacting serine/threonine-protein kinase 1 (MKNK1) (Homo sapiens (Human)).